A 519-amino-acid polypeptide reads, in one-letter code: Galactan beta-1,4-galactosyltransferase GALS2 (519 aa).

The helical transmembrane segment at 28–48 (LALMALLVLCTLATLLPFLPS) threads the bilayer. Residues 257–471 (DYLYCGSSLY…YHGSISQRRE (215 aa)) form the GT92 domain.

The protein belongs to the glycosyltransferase 92 family. In terms of tissue distribution, expressed in the midrib of mature leaves, root vasculature, flower filaments, siliques and seeds.

The protein resides in the golgi apparatus membrane. Its function is as follows. Involved in the biosynthesis of beta-1,4-galactan. Beta-1,4-galactans are abundant polysaccharides in plant cell walls and are found as side-chain of rhamnogalacturonan I, which is a major component of pectin. The protein is Galactan beta-1,4-galactosyltransferase GALS2 of Arabidopsis thaliana (Mouse-ear cress).